A 591-amino-acid polypeptide reads, in one-letter code: Aspartate--tRNA ligase (591 aa).

L-aspartate is bound at residue E173. Residues 197–200 (QLFK) are aspartate. R219 is an L-aspartate binding site. Residues 219 to 221 (RDE) and Q228 contribute to the ATP site. H448 contributes to the L-aspartate binding site. E482 provides a ligand contact to ATP. Residue R489 participates in L-aspartate binding. An ATP-binding site is contributed by 534 to 537 (GLDR).

It belongs to the class-II aminoacyl-tRNA synthetase family. Type 1 subfamily. As to quaternary structure, homodimer.

It localises to the cytoplasm. The catalysed reaction is tRNA(Asp) + L-aspartate + ATP = L-aspartyl-tRNA(Asp) + AMP + diphosphate. Its function is as follows. Catalyzes the attachment of L-aspartate to tRNA(Asp) in a two-step reaction: L-aspartate is first activated by ATP to form Asp-AMP and then transferred to the acceptor end of tRNA(Asp). The polypeptide is Aspartate--tRNA ligase (Shewanella frigidimarina (strain NCIMB 400)).